Here is a 385-residue protein sequence, read N- to C-terminus: Xanthosine methyltransferase 2 (385 aa).

Residue Tyr18 coordinates S-adenosyl-L-homocysteine. Xanthosine-binding residues include Asn21 and Asn25. The S-adenosyl-L-homocysteine site is built by Cys62, Asn67, Asp101, Leu102, Ser140, Phe141, and Cys157. Tyr158 is a xanthosine binding site. Position 159 (Cys159) interacts with S-adenosyl-L-homocysteine. Xanthosine is bound by residues His161 and Trp162. Residues Asn179, Asp261, Phe263, and Asn264 each contribute to the Mg(2+) site. Residues Ser329, Tyr334, and Tyr369 each contribute to the xanthosine site.

This sequence belongs to the methyltransferase superfamily. Type-7 methyltransferase family. Mg(2+) is required as a cofactor. In terms of tissue distribution, expressed at low levels in young leaves but not in mature leaves. Barely detectable in fruits (grains).

The catalysed reaction is xanthosine + S-adenosyl-L-methionine = 7-methylxanthosine + S-adenosyl-L-homocysteine. Its pathway is alkaloid biosynthesis. Functionally, involved in the biosynthesis of caffeine. Specific for xanthosine and could not use xanthosine 5'-monophosphate (XMP) as substrate. Catalyzes the 7-N-methylation activity of xanthosine, but does not have 1-N- or 3-N-methylation activity. The chain is Xanthosine methyltransferase 2 from Coffea arabica (Arabian coffee).